A 139-amino-acid polypeptide reads, in one-letter code: Large-conductance mechanosensitive channel (139 aa).

The next 3 membrane-spanning stretches (helical) occupy residues 19 to 39, 40 to 60, and 81 to 101; these read VGVI…ADII, MPIV…LPLS, and GNFL…FMVI.

This sequence belongs to the MscL family. In terms of assembly, homopentamer.

The protein localises to the cell inner membrane. In terms of biological role, channel that opens in response to stretch forces in the membrane lipid bilayer. May participate in the regulation of osmotic pressure changes within the cell. The chain is Large-conductance mechanosensitive channel from Nitrobacter winogradskyi (strain ATCC 25391 / DSM 10237 / CIP 104748 / NCIMB 11846 / Nb-255).